A 308-amino-acid chain; its full sequence is 1D-myo-inositol 2-acetamido-2-deoxy-alpha-D-glucopyranoside deacetylase (308 aa).

Residues H18, D21, and H153 each coordinate Zn(2+).

The protein belongs to the MshB deacetylase family. The cofactor is Zn(2+).

It catalyses the reaction 1D-myo-inositol 2-acetamido-2-deoxy-alpha-D-glucopyranoside + H2O = 1D-myo-inositol 2-amino-2-deoxy-alpha-D-glucopyranoside + acetate. Its function is as follows. Catalyzes the deacetylation of 1D-myo-inositol 2-acetamido-2-deoxy-alpha-D-glucopyranoside (GlcNAc-Ins) in the mycothiol biosynthesis pathway. In Salinispora arenicola (strain CNS-205), this protein is 1D-myo-inositol 2-acetamido-2-deoxy-alpha-D-glucopyranoside deacetylase.